A 188-amino-acid polypeptide reads, in one-letter code: Archaetidylinositol phosphate synthase (188 aa).

Helical transmembrane passes span 20–40 (LASL…ITLL) and 51–71 (ILAG…GALA). Residues aspartate 64, aspartate 67, aspartate 85, and aspartate 89 each contribute to the Mg(2+) site. Aspartate 89 (proton acceptor) is an active-site residue. 2 helical membrane passes run 96-116 (ILFG…LTLI) and 147-167 (IIII…YLVA).

This sequence belongs to the CDP-alcohol phosphatidyltransferase class-I family. Requires Mn(2+) as cofactor. It depends on Mg(2+) as a cofactor.

It localises to the cell membrane. It catalyses the reaction CDP-2,3-bis-O-(phytanyl)-sn-glycerol + 1D-myo-inositol 3-phosphate = saturated 1-archaetidyl-1D-myo-inositol 3-phosphate + CMP + H(+). The protein operates within lipid metabolism; phospholipid metabolism. In terms of biological role, catalyzes the formation of archaetidylinositol phosphate (AIP) from CDP-archaeol (CDP-ArOH or CDP-2,3-bis-(O-phytanyl)-sn-glycerol) and 1L-myo-inositol 1-phosphate (IP or 1D-myo-inositol 3-phosphate). AIP is a precursor of archaetidyl-myo-inositol (AI), an ether-type inositol phospholipid ubiquitously distributed in archaea membranes and essential for glycolipid biosynthesis in archaea. The polypeptide is Archaetidylinositol phosphate synthase (Pyrococcus horikoshii (strain ATCC 700860 / DSM 12428 / JCM 9974 / NBRC 100139 / OT-3)).